Reading from the N-terminus, the 166-residue chain is Endoribonuclease YbeY (166 aa).

3 residues coordinate Zn(2+): histidine 111, histidine 115, and histidine 121. The segment at 140–166 (ELGYPDPYADDESADPPHSDTPSKDHE) is disordered. Residues 154–166 (DPPHSDTPSKDHE) are compositionally biased toward basic and acidic residues.

This sequence belongs to the endoribonuclease YbeY family. It depends on Zn(2+) as a cofactor.

It localises to the cytoplasm. Its function is as follows. Single strand-specific metallo-endoribonuclease involved in late-stage 70S ribosome quality control and in maturation of the 3' terminus of the 16S rRNA. This chain is Endoribonuclease YbeY, found in Pseudomonas syringae pv. syringae (strain B728a).